The following is a 256-amino-acid chain: 5-keto-4-deoxy-D-glucarate aldolase (256 aa).

Residue His-50 is the Proton acceptor of the active site. Substrate is bound at residue Gln-151. Residue Glu-153 coordinates Mg(2+). Substrate-binding residues include Ser-178 and Asp-179. Residue Asp-179 participates in Mg(2+) binding.

Belongs to the HpcH/HpaI aldolase family. KDGluc aldolase subfamily. Homohexamer; trimer of dimers. It depends on Mg(2+) as a cofactor.

It carries out the reaction 5-dehydro-4-deoxy-D-glucarate = 2-hydroxy-3-oxopropanoate + pyruvate. The catalysed reaction is 2-dehydro-3-deoxy-D-glucarate = 2-hydroxy-3-oxopropanoate + pyruvate. It functions in the pathway carbohydrate acid metabolism; galactarate degradation; D-glycerate from galactarate: step 2/3. In terms of biological role, catalyzes the reversible retro-aldol cleavage of both 5-keto-4-deoxy-D-glucarate and 2-keto-3-deoxy-D-glucarate to pyruvate and tartronic semialdehyde. In Escherichia coli O6:H1 (strain CFT073 / ATCC 700928 / UPEC), this protein is 5-keto-4-deoxy-D-glucarate aldolase.